The sequence spans 235 residues: 1-(5-phosphoribosyl)-5-[(5-phosphoribosylamino)methylideneamino] imidazole-4-carboxamide isomerase (235 aa).

Residue Asp8 is the Proton acceptor of the active site. Asp127 acts as the Proton donor in catalysis.

This sequence belongs to the HisA/HisF family.

The protein resides in the cytoplasm. The catalysed reaction is 1-(5-phospho-beta-D-ribosyl)-5-[(5-phospho-beta-D-ribosylamino)methylideneamino]imidazole-4-carboxamide = 5-[(5-phospho-1-deoxy-D-ribulos-1-ylimino)methylamino]-1-(5-phospho-beta-D-ribosyl)imidazole-4-carboxamide. Its pathway is amino-acid biosynthesis; L-histidine biosynthesis; L-histidine from 5-phospho-alpha-D-ribose 1-diphosphate: step 4/9. The sequence is that of 1-(5-phosphoribosyl)-5-[(5-phosphoribosylamino)methylideneamino] imidazole-4-carboxamide isomerase from Aliarcobacter butzleri (strain RM4018) (Arcobacter butzleri).